Consider the following 278-residue polypeptide: Tryptophan synthase alpha chain (278 aa).

Active-site proton acceptor residues include Glu-50 and Asp-61.

Belongs to the TrpA family. Tetramer of two alpha and two beta chains.

The catalysed reaction is (1S,2R)-1-C-(indol-3-yl)glycerol 3-phosphate + L-serine = D-glyceraldehyde 3-phosphate + L-tryptophan + H2O. Its pathway is amino-acid biosynthesis; L-tryptophan biosynthesis; L-tryptophan from chorismate: step 5/5. Functionally, the alpha subunit is responsible for the aldol cleavage of indoleglycerol phosphate to indole and glyceraldehyde 3-phosphate. This is Tryptophan synthase alpha chain from Rhodopseudomonas palustris (strain HaA2).